The sequence spans 407 residues: Proteasome-activating nucleotidase (407 aa).

The stretch at 22–67 (KEKTQIAELESKVLRLELKNKDVTRENVQIKKENEILKRELDKLRI) forms a coiled coil. Residues 192–197 (GTGKTL) and H331 each bind ATP. The interval 405–407 (MYG) is docks into pockets in the proteasome alpha-ring to cause gate opening.

The protein belongs to the AAA ATPase family. As to quaternary structure, homohexamer. The hexameric complex has a two-ring architecture resembling a top hat that caps the 20S proteasome core at one or both ends. Upon ATP-binding, the C-terminus of PAN interacts with the alpha-rings of the proteasome core by binding to the intersubunit pockets.

The protein localises to the cytoplasm. Its function is as follows. ATPase which is responsible for recognizing, binding, unfolding and translocation of substrate proteins into the archaeal 20S proteasome core particle. Is essential for opening the gate of the 20S proteasome via an interaction with its C-terminus, thereby allowing substrate entry and access to the site of proteolysis. Thus, the C-termini of the proteasomal ATPase function like a 'key in a lock' to induce gate opening and therefore regulate proteolysis. Unfolding activity requires energy from ATP hydrolysis, whereas ATP binding alone promotes ATPase-20S proteasome association which triggers gate opening, and supports translocation of unfolded substrates. In Methanococcus maripaludis (strain C7 / ATCC BAA-1331), this protein is Proteasome-activating nucleotidase.